A 184-amino-acid chain; its full sequence is uncharacterized protein (184 aa).

The disordered stretch occupies residues 130-149 (DKDDDKKKKKKDDKKDDPCN).

Its subcellular location is the virion. This is an uncharacterized protein from Acanthamoeba polyphaga (Amoeba).